Here is a 211-residue protein sequence, read N- to C-terminus: Arginine exporter protein ArgO (211 aa).

6 helical membrane passes run 1-21, 37-57, 68-88, 111-131, 147-167, and 179-199; these read MISYYFQGFALGAAMILPLGP, LMIALLCALSDLVLISAGIFG, LLALVTWGGVAFLLWYGFGAL, IIATMLAVTWLNPHVYLDTFV, WFALGTISASFLWFFGLALLA, and AQRIINILVGVVMWLIAFQLA.

It belongs to the LysE/ArgO transporter (TC 2.A.75) family.

Its subcellular location is the cell inner membrane. The catalysed reaction is L-arginine(in) = L-arginine(out). Its function is as follows. Involved in the export of arginine. Important to control the intracellular level of arginine and the correct balance between arginine and lysine. The sequence is that of Arginine exporter protein ArgO from Salmonella newport (strain SL254).